The following is a 69-amino-acid chain: UPF0337 protein YjbJ (69 aa).

This sequence belongs to the UPF0337 (CsbD) family.

In Escherichia coli O6:H1 (strain CFT073 / ATCC 700928 / UPEC), this protein is UPF0337 protein YjbJ (yjbJ).